The following is a 406-amino-acid chain: Cysteine desulfurase (406 aa).

K226 carries the N6-(pyridoxal phosphate)lysine modification. C364 functions as the Cysteine persulfide intermediate in the catalytic mechanism.

The protein belongs to the class-V pyridoxal-phosphate-dependent aminotransferase family. Csd subfamily. Homodimer. Interacts with SufE and the SufBCD complex composed of SufB, SufC and SufD. The interaction with SufE is required to mediate the direct transfer of the sulfur atom from the S-sulfanylcysteine. Pyridoxal 5'-phosphate serves as cofactor.

It is found in the cytoplasm. The catalysed reaction is (sulfur carrier)-H + L-cysteine = (sulfur carrier)-SH + L-alanine. It catalyses the reaction L-selenocysteine + AH2 = hydrogenselenide + L-alanine + A + H(+). It participates in cofactor biosynthesis; iron-sulfur cluster biosynthesis. In terms of biological role, cysteine desulfurases mobilize the sulfur from L-cysteine to yield L-alanine, an essential step in sulfur metabolism for biosynthesis of a variety of sulfur-containing biomolecules. Component of the suf operon, which is activated and required under specific conditions such as oxidative stress and iron limitation. Acts as a potent selenocysteine lyase in vitro, that mobilizes selenium from L-selenocysteine. Selenocysteine lyase activity is however unsure in vivo. The chain is Cysteine desulfurase from Cronobacter sakazakii (strain ATCC BAA-894) (Enterobacter sakazakii).